Consider the following 154-residue polypeptide: Endoribonuclease YbeY (154 aa).

Positions 114, 118, and 124 each coordinate Zn(2+).

This sequence belongs to the endoribonuclease YbeY family. It depends on Zn(2+) as a cofactor.

The protein resides in the cytoplasm. Its function is as follows. Single strand-specific metallo-endoribonuclease involved in late-stage 70S ribosome quality control and in maturation of the 3' terminus of the 16S rRNA. The chain is Endoribonuclease YbeY from Haemophilus influenzae (strain ATCC 51907 / DSM 11121 / KW20 / Rd).